The following is a 358-amino-acid chain: MEQELRSTPSWKLDKFIEVYLLPNTSFRDDVKSAINVLCDFLKERCFRDTVHPVRVSKVVKGGSSGKGTTLKGKSDADLVVFLNNFTSFEDQLNRRGEFIKEIKKQLYEVQREKHFRVKFEVQSSWWPNPRALSFKLSAPHLQQEVEFDVLPAYDVLGHVSLYSNPDPKIYTILISECISLGKDGEFSTCFTELQRNFLKQRPTKLKSLIRLVKHWYQLCKEKLGKPLPPQYALELLTVYAWERGNGITEFNTAQGFRTILELVTKYQQLRIYWTKYYDFQHPDVSKYLHRQLRKSRPVILDPADPTGNVAGGNQEGWRRLASEARLWLQYPCFMNRGGSPVSSWEVPVDEAWSCILL.

The segment at 14–61 (DKFIEVYLLPNTSFRDDVKSAINVLCDFLKERCFRDTVHPVRVSKVVK) is interaction with dsRNA. Residue Ser-64 participates in ATP binding. Mg(2+) contacts are provided by Asp-76, Asp-78, and Asp-149. The interaction with dsRNA stretch occupies residues 201–211 (QRPTKLKSLIR). Arg-211, Lys-214, and Gln-231 together coordinate ATP.

Belongs to the 2-5A synthase family. In terms of assembly, monomer. Homotetramer. Interacts with OAS1D. Mg(2+) serves as cofactor.

The protein resides in the cytoplasm. Its subcellular location is the mitochondrion. It localises to the nucleus. It is found in the microsome. The protein localises to the endoplasmic reticulum. The catalysed reaction is 3 ATP = 5'-triphosphoadenylyl-(2'-&gt;5')-adenylyl-(2'-&gt;5')-adenosine + 2 diphosphate. Its activity is regulated as follows. Produced as a latent enzyme which is activated by dsRNA generated during the course of viral infection. The dsRNA activator must be at least 15 nucleotides long, and no modification of the 2'-hydroxyl group is tolerated. ssRNA or dsDNA do not act as activators. Functionally, interferon-induced, dsRNA-activated antiviral enzyme which plays a critical role in cellular innate antiviral response. In addition, it may also play a role in other cellular processes such as apoptosis, cell growth, differentiation and gene regulation. Synthesizes higher oligomers of 2'-5'-oligoadenylates (2-5A) from ATP which then bind to the inactive monomeric form of ribonuclease L (RNase L) leading to its dimerization and subsequent activation. Activation of RNase L leads to degradation of cellular as well as viral RNA, resulting in the inhibition of protein synthesis, thus terminating viral replication. Can mediate the antiviral effect via the classical RNase L-dependent pathway or an alternative antiviral pathway independent of RNase L. This is 2'-5'-oligoadenylate synthase 1A (Oas1a) from Rattus norvegicus (Rat).